A 471-amino-acid polypeptide reads, in one-letter code: MAPKHQTPHTHAQIHTHPYRTLLTSFAAWKLFLFAIVLGSTLVGDAYDTSGGLLLQGPANGDAATRPAGLGTTLIARLTSWDAIYYVSAARRDYVFEQEWAFGAGLPFVVRTLLQGLEYVGIIDAPGAEGGRALVAEALAGILVANTAHLLSALVLYRLGQVVWRDQTLSLVAALLHVISPAGLFLSAPYSESSFALLSFSGYLLFALGCRAEGSSNSNNSPTRRDLYTISAGVLFGAATVFRSNGLLNGAPFALEVLRHLPAFVRRPTAIDTLRRLAALGVGGAAVAAGSLGPQAAAYLRYCIPSSSSGASDGEENLLLPRPWCQGYLPSIFTFVQQHYWNVGFLRYWTLPNLPLFLLATPMLVILVKSGVDSLRGRHLPGDAKAVDGESGRLLALIRSTAAAQVLLAVLAATTYHVQIITRISSGYPVWHWWLAGRLVQGDKTGSRIVMFMVIYASIQGALFASFLPPA.

The next 8 helical transmembrane spans lie at 23 to 43 (LTSF…STLV), 135 to 155 (VAEA…SALV), 169 to 189 (LSLV…LSAP), 190 to 210 (YSES…ALGC), 227 to 247 (LYTI…SNGL), 277 to 297 (LAAL…PQAA), 348 to 368 (YWTL…VILV), and 449 to 469 (IVMF…SFLP).

It belongs to the PIGV family.

The protein localises to the endoplasmic reticulum membrane. It participates in glycolipid biosynthesis; glycosylphosphatidylinositol-anchor biosynthesis. Functionally, mannosyltransferase involved in glycosylphosphatidylinositol-anchor biosynthesis. Transfers the second mannose to the glycosylphosphatidylinositol during GPI precursor assembly. This is GPI mannosyltransferase 2 (GPI18) from Chaetomium globosum (strain ATCC 6205 / CBS 148.51 / DSM 1962 / NBRC 6347 / NRRL 1970) (Soil fungus).